Reading from the N-terminus, the 154-residue chain is SsrA-binding protein (154 aa).

The protein belongs to the SmpB family.

It localises to the cytoplasm. Functionally, required for rescue of stalled ribosomes mediated by trans-translation. Binds to transfer-messenger RNA (tmRNA), required for stable association of tmRNA with ribosomes. tmRNA and SmpB together mimic tRNA shape, replacing the anticodon stem-loop with SmpB. tmRNA is encoded by the ssrA gene; the 2 termini fold to resemble tRNA(Ala) and it encodes a 'tag peptide', a short internal open reading frame. During trans-translation Ala-aminoacylated tmRNA acts like a tRNA, entering the A-site of stalled ribosomes, displacing the stalled mRNA. The ribosome then switches to translate the ORF on the tmRNA; the nascent peptide is terminated with the 'tag peptide' encoded by the tmRNA and targeted for degradation. The ribosome is freed to recommence translation, which seems to be the essential function of trans-translation. The polypeptide is SsrA-binding protein (Treponema denticola (strain ATCC 35405 / DSM 14222 / CIP 103919 / JCM 8153 / KCTC 15104)).